The primary structure comprises 375 residues: Cyclic AMP receptor 2 (375 aa).

At 1 to 10 the chain is on the extracellular side; it reads MTIMSDIIAQ. Residues 11 to 30 traverse the membrane as a helical segment; it reads RTILLIADFSSIIGCSLVLI. Over 31–44 the chain is Cytoplasmic; that stretch reads GFWRLKLLRNHITK. A helical transmembrane segment spans residues 45–65; sequence IISLFCATSLFKDVISTIITL. Over 66 to 82 the chain is Extracellular; sequence LYKPDQTESGFPCYLHA. Residues 83–108 traverse the membrane as a helical segment; that stretch reads IVITFGSLACWLWTLMLSFSIYNLIV. The Cytoplasmic portion of the chain corresponds to 109–119; that stretch reads RREPEPERFEK. The helical transmembrane segment at 120-138 threads the bilayer; the sequence is FYFCLCYGLPLISTIVMLS. Topologically, residues 139-161 are extracellular; it reads THIIQPVGGWCWIGDNYDGYRFG. The chain crosses the membrane as a helical span at residues 162 to 180; the sequence is LFYGPFFFIWGTSAILVGL. The Cytoplasmic portion of the chain corresponds to 181–204; the sequence is TSKYTYSVIRSSVSDNKDKHMTYQ. At Ser-192 the chain carries Phosphoserine. The helical transmembrane segment at 205-223 threads the bilayer; the sequence is FKLINYIVVFLVCWVFAIV. The Extracellular portion of the chain corresponds to 224 to 234; that stretch reads NRILNGLNQFP. The chain crosses the membrane as a helical span at residues 235-259; the sequence is TVPNVLHTYFSVSHGFYASITFIYN. Topologically, residues 260-375 are cytoplasmic; the sequence is NPLMWRYFGA…NNINNKNDMI (116 aa). 2 positions are modified to phosphoserine: Ser-298 and Ser-303. The interval 338–375 is disordered; the sequence is PKENENQNHHHHHHHHHHHNHYNNNNNNNNINNKNDMI. A compositionally biased stretch (basic residues) spans 346-358; sequence HHHHHHHHHHHNH. Residues 359–375 show a composition bias toward low complexity; sequence YNNNNNNNNINNKNDMI.

It belongs to the G-protein coupled receptor 5 family. In terms of processing, C-terminal Ser or Thr residues may be phosphorylated.

It is found in the membrane. Receptor for cAMP. Coordinates the aggregation of individual cells into a multicellular organism and regulates the expression of a large number of developmentally regulated genes. The activity of this receptor is mediated by G proteins. Plays a key role during tip formation and late development; involved in cAMP-directed patterning of pre stalk cells as they sort before and during tip formation. This Dictyostelium discoideum (Social amoeba) protein is Cyclic AMP receptor 2 (carB).